The following is a 374-amino-acid chain: Gibberellin 3-beta-dioxygenase 1 (374 aa).

The Fe2OG dioxygenase domain occupies 206–307 (KACAALQLNS…RFSVAYLYGP (102 aa)). Positions 231, 233, and 288 each coordinate Fe cation. Arg298 is a catalytic residue. Position 298 (Arg298) interacts with 2-oxoglutarate.

The protein belongs to the iron/ascorbate-dependent oxidoreductase family. GA3OX subfamily. L-ascorbate is required as a cofactor. Fe(2+) serves as cofactor. Expressed in radicles, roots, internodes, cotyledons, leaves and shoots. Barely detected in developing seeds. Not detected in flowers or young fruits.

The catalysed reaction is gibberellin A20 + 2-oxoglutarate + O2 = gibberellin A1 + succinate + CO2. It functions in the pathway plant hormone biosynthesis; gibberellin biosynthesis. Its function is as follows. Converts the inactive gibberellin (GA) precursors GA9 and GA20 in the bioactives gibberellins GA4 and GA1. Has a small activity on GA29, producing GA8. Unable to convert GA20 to GA5, GA5 to GA3 or GA12 to GA14. Involved in the production of bioactive GA for vegetative growth and development, but not for the 3-beta-hydroxylation of GA in developing seeds. The chain is Gibberellin 3-beta-dioxygenase 1 (LE) from Pisum sativum (Garden pea).